Consider the following 445-residue polypeptide: Phosphoglucosamine mutase (445 aa).

The active-site Phosphoserine intermediate is S102. Mg(2+) contacts are provided by S102, D241, D243, and D245. Position 102 is a phosphoserine (S102).

This sequence belongs to the phosphohexose mutase family. Mg(2+) serves as cofactor. Activated by phosphorylation.

It catalyses the reaction alpha-D-glucosamine 1-phosphate = D-glucosamine 6-phosphate. Its function is as follows. Catalyzes the conversion of glucosamine-6-phosphate to glucosamine-1-phosphate. This Shewanella sp. (strain ANA-3) protein is Phosphoglucosamine mutase.